Consider the following 1178-residue polypeptide: Niemann-Pick type C1-related protein (1178 aa).

The N-linked (GlcNAc...) asparagine glycan is linked to asparagine 41. A run of 2 helical transmembrane segments spans residues 157 to 177 (PWLFIMVSLLATAGMSVGIFL) and 412 to 432 (VVEWLRLCAAVLVVFLYTSVV). In terms of domain architecture, SSD spans 414 to 570 (EWLRLCAAVL…LTFFLAGLSL (157 aa)). Asparagine 433 carries N-linked (GlcNAc...) asparagine glycosylation. Helical transmembrane passes span 448–468 (GALASLLGYLGGAGLVYLCGV), 478–498 (PFLAIGIGVDDLFVIINAYSL), 516–536 (AGLSITITTLTNVITFIIGAL), and 545–565 (FCIITAGALTWGYVLCLTFFL). A glycan (N-linked (GlcNAc...) asparagine) is linked at asparagine 621. Residues 789–809 (ATVLVIFAAVTALAIYGATTL) traverse the membrane as a helical segment. Asparagine 917 and asparagine 943 each carry an N-linked (GlcNAc...) asparagine glycan. A run of 5 helical transmembrane segments spans residues 986–1006 (FTLTNLSIALVCILAISLLLI), 1013–1033 (IIVVLVVSLVDLWLFGFMALI), 1037–1057 (LSMISMVNLLISIGYSVDFTI), 1080–1100 (IVMGAPVTHGMLSTLLSILAL), and 1114–1134 (MMFMVIVFAYTAGMVLLPVVL).

This sequence belongs to the patched family.

It localises to the inner membrane complex. It catalyses the reaction cholesterol(in) = cholesterol(out). Functionally, likely facilitates the efflux of cholesterol and gangliosides from membranes. Plays a role in the regulation of lipid homeostasis. This Toxoplasma gondii (strain ATCC 50611 / Me49) protein is Niemann-Pick type C1-related protein.